Consider the following 179-residue polypeptide: Protein GrpE (179 aa).

The disordered stretch occupies residues 1-22 (MTDNNIENNEEEIRKAPSANDR). Residues 11–22 (EEIRKAPSANDR) show a composition bias toward basic and acidic residues.

It belongs to the GrpE family. Homodimer.

It localises to the cytoplasm. Its function is as follows. Participates actively in the response to hyperosmotic and heat shock by preventing the aggregation of stress-denatured proteins, in association with DnaK and GrpE. It is the nucleotide exchange factor for DnaK and may function as a thermosensor. Unfolded proteins bind initially to DnaJ; upon interaction with the DnaJ-bound protein, DnaK hydrolyzes its bound ATP, resulting in the formation of a stable complex. GrpE releases ADP from DnaK; ATP binding to DnaK triggers the release of the substrate protein, thus completing the reaction cycle. Several rounds of ATP-dependent interactions between DnaJ, DnaK and GrpE are required for fully efficient folding. The polypeptide is Protein GrpE (Rickettsia canadensis (strain McKiel)).